The chain runs to 130 residues: Lysozyme C (130 aa).

The 130-residue stretch at 1 to 130 (KIYERCELAR…LTPYIRGCGV (130 aa)) folds into the C-type lysozyme domain. Disulfide bonds link Cys-6-Cys-128, Cys-30-Cys-116, Cys-65-Cys-81, and Cys-77-Cys-95. Active-site residues include Glu-35 and Asp-53.

It belongs to the glycosyl hydrolase 22 family. As to quaternary structure, monomer.

It localises to the secreted. It carries out the reaction Hydrolysis of (1-&gt;4)-beta-linkages between N-acetylmuramic acid and N-acetyl-D-glucosamine residues in a peptidoglycan and between N-acetyl-D-glucosamine residues in chitodextrins.. Its function is as follows. Lysozymes have primarily a bacteriolytic function; those in tissues and body fluids are associated with the monocyte-macrophage system and enhance the activity of immunoagents. This chain is Lysozyme C (LYZ), found in Oryctolagus cuniculus (Rabbit).